The primary structure comprises 318 residues: ATP-dependent (S)-NAD(P)H-hydrate dehydratase (318 aa).

The YjeF C-terminal domain maps to 3–313; the sequence is AREVFKRVIP…KEIGPAFDSL (311 aa). (6S)-NADPHX is bound by residues G119 and 172–178; that span reads NTNEFKR. ATP is bound by residues 210 to 214 and 229 to 238; these read KGSKD and TSLRRCGGQG. D239 contributes to the (6S)-NADPHX binding site.

The protein belongs to the NnrD/CARKD family. Mg(2+) is required as a cofactor.

The protein localises to the cytoplasm. The catalysed reaction is (6S)-NADHX + ATP = ADP + phosphate + NADH + H(+). It catalyses the reaction (6S)-NADPHX + ATP = ADP + phosphate + NADPH + H(+). In terms of biological role, catalyzes the dehydration of the S-form of NAD(P)HX at the expense of ATP, which is converted to ADP. Together with NAD(P)HX epimerase, which catalyzes the epimerization of the S- and R-forms, the enzyme allows the repair of both epimers of NAD(P)HX, a damaged form of NAD(P)H that is a result of enzymatic or heat-dependent hydration. This Batrachochytrium dendrobatidis (strain JAM81 / FGSC 10211) (Frog chytrid fungus) protein is ATP-dependent (S)-NAD(P)H-hydrate dehydratase.